Here is a 425-residue protein sequence, read N- to C-terminus: Serine--tRNA ligase (425 aa).

Residue 230-232 coordinates L-serine; that stretch reads TAE. 261–263 is an ATP binding site; it reads RSE. Residue glutamate 284 coordinates L-serine. 348–351 is an ATP binding site; the sequence is EISS. Serine 384 is an L-serine binding site.

This sequence belongs to the class-II aminoacyl-tRNA synthetase family. Type-1 seryl-tRNA synthetase subfamily. As to quaternary structure, homodimer. The tRNA molecule binds across the dimer.

Its subcellular location is the cytoplasm. It catalyses the reaction tRNA(Ser) + L-serine + ATP = L-seryl-tRNA(Ser) + AMP + diphosphate + H(+). The enzyme catalyses tRNA(Sec) + L-serine + ATP = L-seryl-tRNA(Sec) + AMP + diphosphate + H(+). It functions in the pathway aminoacyl-tRNA biosynthesis; selenocysteinyl-tRNA(Sec) biosynthesis; L-seryl-tRNA(Sec) from L-serine and tRNA(Sec): step 1/1. In terms of biological role, catalyzes the attachment of serine to tRNA(Ser). Is also able to aminoacylate tRNA(Sec) with serine, to form the misacylated tRNA L-seryl-tRNA(Sec), which will be further converted into selenocysteinyl-tRNA(Sec). This Streptococcus pyogenes serotype M49 (strain NZ131) protein is Serine--tRNA ligase.